Here is a 445-residue protein sequence, read N- to C-terminus: tRNA(Ile)-lysidine synthase (445 aa).

19–24 is a binding site for ATP; it reads SGGIDS.

It belongs to the tRNA(Ile)-lysidine synthase family.

The protein localises to the cytoplasm. The enzyme catalyses cytidine(34) in tRNA(Ile2) + L-lysine + ATP = lysidine(34) in tRNA(Ile2) + AMP + diphosphate + H(+). Its function is as follows. Ligates lysine onto the cytidine present at position 34 of the AUA codon-specific tRNA(Ile) that contains the anticodon CAU, in an ATP-dependent manner. Cytidine is converted to lysidine, thus changing the amino acid specificity of the tRNA from methionine to isoleucine. This chain is tRNA(Ile)-lysidine synthase, found in Buchnera aphidicola subsp. Schizaphis graminum (strain Sg).